Here is a 153-residue protein sequence, read N- to C-terminus: MESWLFLAAILIVALLAKNQSLIIATAVVLVLKALPISEKVLPVIQAKGINWGVTVISVAILVPIATGQIGFKELISAFKTPAGFIAVGCGVLVAVLSAKGVGLLAASPEMTVALVFGTIMGVVFLKGIAAGPVIAAGITYTILTIFNLVPIH.

The next 4 membrane-spanning stretches (helical) occupy residues 4 to 24 (WLFLAAILIVALLAKNQSLII), 52 to 72 (WGVTVISVAILVPIATGQIGF), 85 to 105 (FIAVGCGVLVAVLSAKGVGLL), and 115 to 135 (LVFGTIMGVVFLKGIAAGPVI).

This sequence belongs to the UPF0756 family.

Its subcellular location is the cell membrane. This Latilactobacillus sakei subsp. sakei (strain 23K) (Lactobacillus sakei subsp. sakei) protein is UPF0756 membrane protein LCA_1031.